Reading from the N-terminus, the 468-residue chain is Probable multidrug resistance protein NorM (468 aa).

The next 11 helical transmembrane spans lie at 57 to 79 (LAAGGLGANLFFVVVTLLQGVLT), 100 to 122 (IYWTGFALSLLLAVPAFALLSFA), 142 to 164 (YAAVLRFAAPGSLIGVGLMRSFL), 173 to 195 (LLWVSLAGVGVNAFLNYGLIHGA), 205 to 227 (GSATATTITIWLTAITLVALLHG), 248 to 270 (LFGIGWPVAITYGVESTLFLATG), 280 to 302 (SLAAHQIALNVASVAFMVPLAIG), 323 to 345 (HAGFVALGLGVAFMSLSGLVLIV), 360 to 382 (PANARTVVLATSLLGIAAVFQIV), 401 to 423 (VPMLAATLGYWGIGFPTGYWFAF), and 433 to 452 (WWGLAAGLASVAMLMTWRFH).

Belongs to the multi antimicrobial extrusion (MATE) (TC 2.A.66.1) family.

The protein resides in the cell inner membrane. Multidrug efflux pump. This chain is Probable multidrug resistance protein NorM (norM), found in Burkholderia mallei (strain ATCC 23344).